The sequence spans 582 residues: Threonine--tRNA ligase (582 aa).

Residues 185-478 (DHRKLGKELE…LTEQYGGAFP (294 aa)) are catalytic. Positions 278, 329, and 455 each coordinate Zn(2+).

This sequence belongs to the class-II aminoacyl-tRNA synthetase family. In terms of assembly, homodimer. Requires Zn(2+) as cofactor.

The protein resides in the cytoplasm. It carries out the reaction tRNA(Thr) + L-threonine + ATP = L-threonyl-tRNA(Thr) + AMP + diphosphate + H(+). In terms of biological role, catalyzes the attachment of threonine to tRNA(Thr) in a two-step reaction: L-threonine is first activated by ATP to form Thr-AMP and then transferred to the acceptor end of tRNA(Thr). Also edits incorrectly charged L-seryl-tRNA(Thr). The protein is Threonine--tRNA ligase of Dehalococcoides mccartyi (strain ATCC BAA-2100 / JCM 16839 / KCTC 5957 / BAV1).